Reading from the N-terminus, the 90-residue chain is Acylphosphatase (90 aa).

Residues 3–90 form the Acylphosphatase-like domain; that stretch reads AVHMNASGQV…FEGQDFIVKY (88 aa). Residues Arg18 and Asn36 contribute to the active site.

This sequence belongs to the acylphosphatase family.

The catalysed reaction is an acyl phosphate + H2O = a carboxylate + phosphate + H(+). This Pediococcus pentosaceus (strain ATCC 25745 / CCUG 21536 / LMG 10740 / 183-1w) protein is Acylphosphatase (acyP).